We begin with the raw amino-acid sequence, 378 residues long: Metalloendoproteinase 2-MMP (378 aa).

The N-terminal stretch at 1–20 (MRFCVFGFLSLFLIVSPASA) is a signal peptide. The propeptide at 21–154 (WFFPNSTAVP…SRTHLHAVKR (134 aa)) is activation peptide. Asn-25, Asn-35, Asn-46, Asn-79, and Asn-102 each carry an N-linked (GlcNAc...) asparagine glycan. Residues 118–125 (PRCGNPDV) carry the Cysteine switch motif. Cys-120 provides a ligand contact to Zn(2+). Residues Asn-127, Asn-143, and Asn-203 are each glycosylated (N-linked (GlcNAc...) asparagine). His-280 lines the Zn(2+) pocket. The active site involves Glu-281. Residues His-284 and His-290 each contribute to the Zn(2+) site. N-linked (GlcNAc...) asparagine glycosylation occurs at Asn-330. Ser-349 carries GPI-anchor amidated serine lipidation. Positions 350-378 (AAWRIDGSSRSTIVSLLLSTVGLVLWFLP) are cleaved as a propeptide — removed in mature form.

It belongs to the peptidase M10A family. Matrix metalloproteinases (MMPs) subfamily. Zn(2+) is required as a cofactor. Mostly expressed in roots, and, to a lower extent, in flowers, leaves and stems.

It localises to the cell membrane. Repressed by acetohydroxamic acid (AHA). Functionally, matrix metalloproteinases (MMPs) or matrixins may play a role in the degradation and remodeling of the extracellular matrix (ECM) during development or in response to stresses. Required for plant growth, morphogenesis, and development with particular relevance for flowering and senescence. Active on McaPLGLDpaAR-NH(2) (QF24) and myelin basic protein (MBP) and, to some extent, on beta-casein. The chain is Metalloendoproteinase 2-MMP from Arabidopsis thaliana (Mouse-ear cress).